Here is a 398-residue protein sequence, read N- to C-terminus: MALRSLFLPNAFPNASSFRGGSRRGAAPRAMPIVMKSNVEVGARNEIAKKPFTPPFEIHEQITHSLPPEKIEIFKSLEGWATDNILIHLRPVEKSWQPQDYLPDPSAESFHDQVKELRQRSKEIPDDYFVALVGDMITEEALPTYQTMLNTLDGVRDETGASLTSWAVWTRAWTAEENRHGDLLNKYLYLTGRVDMRQIEKTIQYLIGSGMDPRTENNPYLGFIYTSFQERATSISHGNTARHAKDYGDLSLAQVCGIIASDEKRHEKAYTKIIEKLFEIDPDATVLAFADMMKKKISMPAHLMYDGRDDNLFKHFSSVAQRLGVYTAKDYADILEFLVERWNVEELTGLSSEGRKAQDYVCTLVPRIRKVDERAQGMAKKGGQTMRFSWIHDREVML.

The N-terminal 29 residues, 1–29, are a transit peptide targeting the chloroplast; that stretch reads MALRSLFLPNAFPNASSFRGGSRRGAAPR. Residues E139, E177, H180, E230, E263, and H266 each contribute to the Fe cation site.

Belongs to the fatty acid desaturase type 2 family. As to quaternary structure, homodimer. Requires Fe(2+) as cofactor. In terms of tissue distribution, preferentially expressed in the flower labellum. Low expression in leaves.

The protein resides in the plastid. The protein localises to the chloroplast stroma. The enzyme catalyses hexadecanoyl-[ACP] + 2 reduced [2Fe-2S]-[ferredoxin] + O2 + 2 H(+) = (4Z)-hexadecenoyl-[ACP] + 2 oxidized [2Fe-2S]-[ferredoxin] + 2 H2O. The protein operates within lipid metabolism; fatty acid metabolism. Its function is as follows. Converts palmitoyl-ACP to (4Z)-hexadec-4-enoyl-ACP by introduction of a cis double bond between carbons 4 and 5 of the acyl chain. The sequence is that of Palmitoyl-[acyl-carrier-protein] 4-desaturase 3, chloroplastic (SAD3) from Ophrys arachnitiformis subsp. archipelagi (Orchid).